Reading from the N-terminus, the 84-residue chain is Toluene-4-monooxygenase system, hydroxylase component subunit gamma (84 aa).

Belongs to the TmoB/XamoB family. In terms of assembly, the alkene monooxygenase multicomponent enzyme system is composed of an electron transfer component and a monooxygenase component interacting with the effector protein TmoD. The electron transfer component is composed of a ferredoxin reductase (TmoF) and a ferredoxin (TmoC), and the monooxygenase component is formed by a heterohexamer (dimer of heterotrimers) of two alpha subunits (TmoA), two beta subunits (TmoE) and two gamma subunits (TmoB).

The enzyme catalyses toluene + NADH + O2 + H(+) = 4-methylphenol + NAD(+) + H2O. It participates in xenobiotic degradation; toluene degradation. Its activity is regulated as follows. Inhibited by Zn(2+) and Cu(2+). Its function is as follows. Component of the toluene-4-monooxygenase multicomponent enzyme system which catalyzes the O2- and NADH-dependent hydroxylation of toluene to form p-cresol. Also able to convert benzene to phenol, catechol, and 1,2,3-trihydroxybenzene by successive hydroxylations. In Ectopseudomonas mendocina (Pseudomonas mendocina), this protein is Toluene-4-monooxygenase system, hydroxylase component subunit gamma.